The following is a 405-amino-acid chain: MINYNFRNRTSFPEDFLKKANVIKQIQNRFYTYGYDQIETPLFEDYDMYSNVQGTVQQDDMVKVIHSSGRVLVLRPDVTIPITRQYVETDMTSHYQRFSYCLDIFRFNETQQAYRTQAGVEFFGDESPEADAEVIALAIDSLKDLKIAPFKIEIGHSGIYKELLEQANLTDQEQQTLHALIQSKNISETSSFLDHLSIDQDLKQKIELIPMLYGDPSTVIKRAQAIVTNETMQQVVDTLFNVYSLLKDDQIEEYISFNLGLINNMNYYSGIIFQGFTEQIGQPILMGGRYDHLSSQFENEIPAVGFAFEIDKLLTLITPGDQPLITQADFLIEYQPNCRQDALLLARRLRQANKKVIIQPTESSSKIKASNIILVDSNSYQLKSSDIQTTFSSIDQTLQHVLKKR.

The protein belongs to the class-II aminoacyl-tRNA synthetase family. HisZ subfamily. In terms of assembly, heteromultimer composed of HisG and HisZ subunits.

The protein resides in the cytoplasm. Its pathway is amino-acid biosynthesis; L-histidine biosynthesis; L-histidine from 5-phospho-alpha-D-ribose 1-diphosphate: step 1/9. Required for the first step of histidine biosynthesis. May allow the feedback regulation of ATP phosphoribosyltransferase activity by histidine. This is ATP phosphoribosyltransferase regulatory subunit from Oceanobacillus iheyensis (strain DSM 14371 / CIP 107618 / JCM 11309 / KCTC 3954 / HTE831).